Consider the following 219-residue polypeptide: Thiamine-phosphate synthase (219 aa).

Residues 44-48 (QFREK) and N79 each bind 4-amino-2-methyl-5-(diphosphooxymethyl)pyrimidine. Positions 80 and 99 each coordinate Mg(2+). Residue S117 participates in 4-amino-2-methyl-5-(diphosphooxymethyl)pyrimidine binding. Position 143 to 145 (143 to 145 (TST)) interacts with 2-[(2R,5Z)-2-carboxy-4-methylthiazol-5(2H)-ylidene]ethyl phosphate. A 4-amino-2-methyl-5-(diphosphooxymethyl)pyrimidine-binding site is contributed by K146. 2-[(2R,5Z)-2-carboxy-4-methylthiazol-5(2H)-ylidene]ethyl phosphate contacts are provided by residues G175 and 195-196 (IS).

It belongs to the thiamine-phosphate synthase family. Requires Mg(2+) as cofactor.

It catalyses the reaction 2-[(2R,5Z)-2-carboxy-4-methylthiazol-5(2H)-ylidene]ethyl phosphate + 4-amino-2-methyl-5-(diphosphooxymethyl)pyrimidine + 2 H(+) = thiamine phosphate + CO2 + diphosphate. The catalysed reaction is 2-(2-carboxy-4-methylthiazol-5-yl)ethyl phosphate + 4-amino-2-methyl-5-(diphosphooxymethyl)pyrimidine + 2 H(+) = thiamine phosphate + CO2 + diphosphate. It carries out the reaction 4-methyl-5-(2-phosphooxyethyl)-thiazole + 4-amino-2-methyl-5-(diphosphooxymethyl)pyrimidine + H(+) = thiamine phosphate + diphosphate. The protein operates within cofactor biosynthesis; thiamine diphosphate biosynthesis; thiamine phosphate from 4-amino-2-methyl-5-diphosphomethylpyrimidine and 4-methyl-5-(2-phosphoethyl)-thiazole: step 1/1. Condenses 4-methyl-5-(beta-hydroxyethyl)thiazole monophosphate (THZ-P) and 2-methyl-4-amino-5-hydroxymethyl pyrimidine pyrophosphate (HMP-PP) to form thiamine monophosphate (TMP). This chain is Thiamine-phosphate synthase, found in Bacillus thuringiensis (strain Al Hakam).